The following is a 552-amino-acid chain: MDTSSEMLVRFGRRCGRAKESTEIRNSEEDQVLYLPLLPSKVDLQQVTIIPHDEWKRIQDSLDRLTREAACLRAERKAKKEMHLRSQEVVKHWTNTYAGMKEQKLEAKKKRDEEIEAERQILDLEEEIYKQGKRKKAIENAKQYQFYQTERVKNFHSGLLLSRVMKERDAQIEFRKSKIKSDKKWEEQLKLNIEKAFKEEQEKAEKRHRERVALAKDHLKQIKEHEEEEERRKKYEEKDAEEIKRQNALYEIEMRKKLEKKREEMHESRRRFLEHMQDKHIIKAVEQQQQEEEDEKMRKFIKAKKRLIQMGKEKEAETHRLMEKRRERIHNFLSELLKEKLDNEDMIIARDIAEAEAEWEKREREKDEKNKAELKTIAEYRAIVMKNKEEEERQRKIEAKEQLLAVMKADQIFWEHEKEKKCKADKEHQEVQDAHIQQMAKNKFNAKQAKQAELDYCRLTEALVAEKEKEFQDYAREVIELESETTNKYIYPLVKAVQEGPGGGRGPVFVDRGGLRPSYQANDVTGVQLPFYNSQGPKYNFQKSKRRLGFTW.

4 coiled-coil regions span residues 53–143, 186–307, 348–409, and 460–488; these read DEWK…NAKQ, EEQL…KKRL, IARD…VMKA, and TEALVAEKEKEFQDYAREVIELESETTNK. A disordered region spans residues 216–238; sequence KDHLKQIKEHEEEEERRKKYEEK.

Microtubule inner protein component of sperm flagellar doublet microtubules. As to expression, expressed in airway epithelial cells.

It is found in the cytoplasm. It localises to the cytoskeleton. The protein localises to the cilium axoneme. Its subcellular location is the flagellum axoneme. Microtubule inner protein (MIP) part of the dynein-decorated doublet microtubules (DMTs) in cilia axoneme, which is required for motile cilia beating. The sequence is that of Cilia- and flagella- associated protein 210 from Homo sapiens (Human).